We begin with the raw amino-acid sequence, 439 residues long: Probable guanine deaminase (439 aa).

Residues histidine 76 and histidine 78 each coordinate Zn(2+). Residues 78 to 81 (HYPQ), 203 to 204 (RF), 231 to 234 (HINE), and aspartate 321 each bind substrate. The Zn(2+) site is built by histidine 231 and aspartate 321.

It belongs to the metallo-dependent hydrolases superfamily. ATZ/TRZ family. The cofactor is Zn(2+).

The enzyme catalyses guanine + H2O + H(+) = xanthine + NH4(+). It functions in the pathway purine metabolism; guanine degradation; xanthine from guanine: step 1/1. Its function is as follows. Catalyzes the hydrolytic deamination of guanine, producing xanthine and ammonia. The chain is Probable guanine deaminase (guaD) from Deinococcus radiodurans (strain ATCC 13939 / DSM 20539 / JCM 16871 / CCUG 27074 / LMG 4051 / NBRC 15346 / NCIMB 9279 / VKM B-1422 / R1).